The following is a 354-amino-acid chain: Bacteriochlorophyll a protein (354 aa).

The bacteriochlorophyll a site is built by histidine 99, histidine 134, histidine 278, histidine 285, and histidine 286.

As to quaternary structure, homotrimer. Each subunit contains 7 molecules of bacteriochlorophyll a.

Its function is as follows. Intermediary in the transfer of excitation energy from the chlorophyll to the reaction centers. The sequence is that of Bacteriochlorophyll a protein (fmoA) from Chlorobaculum thiosulfatiphilum (Chlorobium limicola f.sp. thiosulfatophilum).